The sequence spans 201 residues: Adenylyl-sulfate kinase (201 aa).

35–42 (GLSGSGKS) contributes to the ATP binding site. Ser109 acts as the Phosphoserine intermediate in catalysis.

This sequence belongs to the APS kinase family.

The enzyme catalyses adenosine 5'-phosphosulfate + ATP = 3'-phosphoadenylyl sulfate + ADP + H(+). The protein operates within sulfur metabolism; hydrogen sulfide biosynthesis; sulfite from sulfate: step 2/3. Functionally, catalyzes the synthesis of activated sulfate. This chain is Adenylyl-sulfate kinase, found in Citrobacter koseri (strain ATCC BAA-895 / CDC 4225-83 / SGSC4696).